A 394-amino-acid chain; its full sequence is Cystathionine gamma-lyase (394 aa).

Residues 37–56 (KQSSPANPIGTYEYSRSQNP) form a disordered region. Substrate is bound by residues R52, Y104, and R109. K204 bears the N6-(pyridoxal phosphate)lysine mark. E334 contacts substrate. The residue at position 362 (S362) is a Phosphoserine.

The protein belongs to the trans-sulfuration enzymes family. Homotetramer. Requires pyridoxal 5'-phosphate as cofactor.

The protein resides in the cytoplasm. It carries out the reaction L,L-cystathionine + H2O = 2-oxobutanoate + L-cysteine + NH4(+). It participates in amino-acid biosynthesis; L-cysteine biosynthesis; L-cysteine from L-homocysteine and L-serine: step 2/2. Its function is as follows. Catalyzes the production of cysteine from cystathionine in the reverse transsulfuration pathway for the biosynthesis of sulfur-containing amino acids cysteine and methionine. In this pathway, homocysteine sulfur is converted to cysteine sulfur. Also has cystathionine beta-lyase and cystathionine gamma-synthase activities in vitro. Cystathionine beta-lyase may be physiological, while cystathionine gamma-synthase activity is not, as the required substrate O-succinyl-L-homoserine(OSH) does not occur naturally in S.cerevisiae. This Saccharomyces cerevisiae (strain ATCC 204508 / S288c) (Baker's yeast) protein is Cystathionine gamma-lyase.